A 483-amino-acid chain; its full sequence is UDP-N-acetylmuramoyl-L-alanyl-D-glutamate--2,6-diaminopimelate ligase (483 aa).

Serine 30 is a binding site for UDP-N-acetyl-alpha-D-muramoyl-L-alanyl-D-glutamate. 109–115 (GTNGKTT) provides a ligand contact to ATP. UDP-N-acetyl-alpha-D-muramoyl-L-alanyl-D-glutamate-binding positions include 151–152 (TT), serine 178, and arginine 186. Lysine 218 carries the post-translational modification N6-carboxylysine. Meso-2,6-diaminopimelate contacts are provided by residues arginine 380, 403–406 (DNPR), glycine 453, and glutamate 457. Residues 403 to 406 (DNPR) carry the Meso-diaminopimelate recognition motif motif.

Belongs to the MurCDEF family. MurE subfamily. Mg(2+) is required as a cofactor. In terms of processing, carboxylation is probably crucial for Mg(2+) binding and, consequently, for the gamma-phosphate positioning of ATP.

The protein localises to the cytoplasm. It carries out the reaction UDP-N-acetyl-alpha-D-muramoyl-L-alanyl-D-glutamate + meso-2,6-diaminopimelate + ATP = UDP-N-acetyl-alpha-D-muramoyl-L-alanyl-gamma-D-glutamyl-meso-2,6-diaminopimelate + ADP + phosphate + H(+). It functions in the pathway cell wall biogenesis; peptidoglycan biosynthesis. Its function is as follows. Catalyzes the addition of meso-diaminopimelic acid to the nucleotide precursor UDP-N-acetylmuramoyl-L-alanyl-D-glutamate (UMAG) in the biosynthesis of bacterial cell-wall peptidoglycan. In Chlamydia muridarum (strain MoPn / Nigg), this protein is UDP-N-acetylmuramoyl-L-alanyl-D-glutamate--2,6-diaminopimelate ligase.